The chain runs to 95 residues: Aspartyl/glutamyl-tRNA(Asn/Gln) amidotransferase subunit C (95 aa).

Belongs to the GatC family. Heterotrimer of A, B and C subunits.

The enzyme catalyses L-glutamyl-tRNA(Gln) + L-glutamine + ATP + H2O = L-glutaminyl-tRNA(Gln) + L-glutamate + ADP + phosphate + H(+). It catalyses the reaction L-aspartyl-tRNA(Asn) + L-glutamine + ATP + H2O = L-asparaginyl-tRNA(Asn) + L-glutamate + ADP + phosphate + 2 H(+). Its function is as follows. Allows the formation of correctly charged Asn-tRNA(Asn) or Gln-tRNA(Gln) through the transamidation of misacylated Asp-tRNA(Asn) or Glu-tRNA(Gln) in organisms which lack either or both of asparaginyl-tRNA or glutaminyl-tRNA synthetases. The reaction takes place in the presence of glutamine and ATP through an activated phospho-Asp-tRNA(Asn) or phospho-Glu-tRNA(Gln). This chain is Aspartyl/glutamyl-tRNA(Asn/Gln) amidotransferase subunit C, found in Ectopseudomonas mendocina (strain ymp) (Pseudomonas mendocina).